Here is a 383-residue protein sequence, read N- to C-terminus: Transcription factor Sox-17-alpha (383 aa).

Disordered regions lie at residues 1–20 (MSSP…KCSV) and 37–58 (NSLG…GKAE). The segment at residues 61 to 129 (IRRPMNAFMV…QHMQDHPNYK (69 aa)) is a DNA-binding region (HMG box). In terms of domain architecture, Sox C-terminal spans 267-382 (GSPVQGMMGC…TAVYYCNYPS (116 aa)). A 9aaTAD motif is present at residues 331–339 (TEFEQYLSY). Residues 332–337 (EFEQYL) form a required for transcriptional activity and interaction with ctnnb1 region.

As to quaternary structure, interacts (via C-terminus) with ctnnb1/beta-catenin (via Armadillo repeats); this interaction is required for inhibition of wnt-signaling. Expressed throughout the deep and superficial endoderm during gastrulation. During neural and early tail bud stages, expression declines significantly in the anterior endoderm, except in the endoderm behind the cement gland. Strong expression persists in the endoderm posterior to the liver diverticulum until late tail bud stage. By late tailbud, expression is undetectable in most of the endoderm but is maintained in the presumptive gall bladder region and the extreme posterior region. In addition, expressed in endothelial cells in the head and along the flank of the embryo.

The protein resides in the nucleus. In terms of biological role, transcription activator. Binds to the DNA sequence 5'-AACAAT-3'. All of the sox17 proteins are required for embryonic endoderm development and gastrulation movements, and show some redundancy in function. In addition, the sox17 proteins have distinct but overlapping roles in later gut development. Acts downstream of vegt-signaling in endoderm differentiation to induce a range of endodermal genes both directly (including endodermin and dhh/chh) and indirectly. Also represses wnt-responsive genes to inhibit wnt/beta-catenin signaling. The polypeptide is Transcription factor Sox-17-alpha (sox17a) (Xenopus tropicalis (Western clawed frog)).